Here is a 135-residue protein sequence, read N- to C-terminus: Mini-ribonuclease 3 (135 aa).

Asp-17 is an active-site residue.

The protein belongs to the MrnC RNase family. Homodimer. Mg(2+) serves as cofactor.

It localises to the cytoplasm. Involved in correct processing of both the 5' and 3' ends of 23S rRNA precursor. Processes 30S rRNA precursor transcript even in absence of ribonuclease 3 (Rnc); Rnc processes 30S rRNA into smaller rRNA precursors. In Bacillus cereus (strain ATCC 14579 / DSM 31 / CCUG 7414 / JCM 2152 / NBRC 15305 / NCIMB 9373 / NCTC 2599 / NRRL B-3711), this protein is Mini-ribonuclease 3.